The sequence spans 178 residues: Protein GrpE (178 aa).

The protein belongs to the GrpE family. Homodimer.

Its subcellular location is the cytoplasm. Its function is as follows. Participates actively in the response to hyperosmotic and heat shock by preventing the aggregation of stress-denatured proteins, in association with DnaK and GrpE. It is the nucleotide exchange factor for DnaK and may function as a thermosensor. Unfolded proteins bind initially to DnaJ; upon interaction with the DnaJ-bound protein, DnaK hydrolyzes its bound ATP, resulting in the formation of a stable complex. GrpE releases ADP from DnaK; ATP binding to DnaK triggers the release of the substrate protein, thus completing the reaction cycle. Several rounds of ATP-dependent interactions between DnaJ, DnaK and GrpE are required for fully efficient folding. This is Protein GrpE from Rickettsia akari (strain Hartford).